A 56-amino-acid polypeptide reads, in one-letter code: Large ribosomal subunit protein bL33 (56 aa).

Residues 1–12 are compositionally biased toward basic and acidic residues; sequence MASKGGRDKIKL. Positions 1–28 are disordered; the sequence is MASKGGRDKIKLESTAGTGHFYTTTKNK. Residues 15–25 show a composition bias toward polar residues; that stretch reads TAGTGHFYTTT.

This sequence belongs to the bacterial ribosomal protein bL33 family.

This Cupriavidus necator (strain ATCC 17699 / DSM 428 / KCTC 22496 / NCIMB 10442 / H16 / Stanier 337) (Ralstonia eutropha) protein is Large ribosomal subunit protein bL33.